Here is a 348-residue protein sequence, read N- to C-terminus: Probable protein phosphatase 2C 35 (348 aa).

Residues 11-24 (RYPSSSSDGDSRGP) are compositionally biased toward low complexity. The disordered stretch occupies residues 11-40 (RYPSSSSDGDSRGPLEANGVLKGKDQKPLG). A PPM-type phosphatase domain is found at 52-342 (VYSVLSQRGY…DDITIIIVQI (291 aa)). Asp93, Gly94, Asp289, and Asp333 together coordinate Mn(2+).

It belongs to the PP2C family. The cofactor is Mg(2+). Mn(2+) serves as cofactor.

The catalysed reaction is O-phospho-L-seryl-[protein] + H2O = L-seryl-[protein] + phosphate. It catalyses the reaction O-phospho-L-threonyl-[protein] + H2O = L-threonyl-[protein] + phosphate. The polypeptide is Probable protein phosphatase 2C 35 (Arabidopsis thaliana (Mouse-ear cress)).